The sequence spans 71 residues: DNA-directed RNA polymerase subunit omega (71 aa).

This sequence belongs to the RNA polymerase subunit omega family. In terms of assembly, the RNAP catalytic core consists of 2 alpha, 1 beta/beta' and 1 omega subunit. When a sigma factor is associated with the core the holoenzyme is formed, which can initiate transcription.

It catalyses the reaction RNA(n) + a ribonucleoside 5'-triphosphate = RNA(n+1) + diphosphate. Its function is as follows. Promotes RNA polymerase assembly. Latches the N- and C-terminal regions of the beta' subunit thereby facilitating its interaction with the beta and alpha subunits. This is DNA-directed RNA polymerase subunit omega from Wolinella succinogenes (strain ATCC 29543 / DSM 1740 / CCUG 13145 / JCM 31913 / LMG 7466 / NCTC 11488 / FDC 602W) (Vibrio succinogenes).